A 135-amino-acid chain; its full sequence is UPF0299 membrane protein PC1_1498 (135 aa).

A run of 4 helical transmembrane segments spans residues 5–25 (FIVC…LLAG), 30–50 (ALLP…FTLL), 63–83 (GCHL…VGVM), and 93–113 (FGPI…VVGF).

Belongs to the UPF0299 family.

It is found in the cell inner membrane. The polypeptide is UPF0299 membrane protein PC1_1498 (Pectobacterium carotovorum subsp. carotovorum (strain PC1)).